The primary structure comprises 597 residues: Elongation factor 4 (597 aa).

Residues 2–184 enclose the tr-type G domain; it reads KNIRNFSIIA…TVVQKIPAPK (183 aa). GTP contacts are provided by residues 14–19 and 131–134; these read DHGKST and NKID.

Belongs to the TRAFAC class translation factor GTPase superfamily. Classic translation factor GTPase family. LepA subfamily.

It is found in the cell inner membrane. The enzyme catalyses GTP + H2O = GDP + phosphate + H(+). Its function is as follows. Required for accurate and efficient protein synthesis under certain stress conditions. May act as a fidelity factor of the translation reaction, by catalyzing a one-codon backward translocation of tRNAs on improperly translocated ribosomes. Back-translocation proceeds from a post-translocation (POST) complex to a pre-translocation (PRE) complex, thus giving elongation factor G a second chance to translocate the tRNAs correctly. Binds to ribosomes in a GTP-dependent manner. This chain is Elongation factor 4, found in Laribacter hongkongensis (strain HLHK9).